Consider the following 371-residue polypeptide: NADH-ubiquinone oxidoreductase chain 1 (371 aa).

The next 10 helical transmembrane spans lie at Ile7–Val27, Pro44–Leu64, Leu77–Pro97, Leu109–Gly129, Leu153–Val173, Ala180–Ala200, Ala226–Leu246, Val263–Val283, Gly302–Leu322, and Phe338–Leu358.

This sequence belongs to the complex I subunit 1 family.

The protein localises to the mitochondrion inner membrane. The catalysed reaction is a ubiquinone + NADH + 5 H(+)(in) = a ubiquinol + NAD(+) + 4 H(+)(out). In terms of biological role, core subunit of the mitochondrial membrane respiratory chain NADH dehydrogenase (Complex I) that is believed to belong to the minimal assembly required for catalysis. Complex I functions in the transfer of electrons from NADH to the respiratory chain. The immediate electron acceptor for the enzyme is believed to be ubiquinone. The polypeptide is NADH-ubiquinone oxidoreductase chain 1 (ndh-1) (Neurospora crassa (strain ATCC 24698 / 74-OR23-1A / CBS 708.71 / DSM 1257 / FGSC 987)).